We begin with the raw amino-acid sequence, 120 residues long: MALKIRLARGGSKKRPYYHVVIADARSPRDGRFLEKVGSWNPMLAKDDAKRVELDADRIKHWLDNGAQPTDRVLRFLDEAGVAKREVKSNPEKAKPGKRAQERAAEKAQKAADAAAATAE.

Residues 84–110 show a composition bias toward basic and acidic residues; the sequence is KREVKSNPEKAKPGKRAQERAAEKAQK. A disordered region spans residues 84–120; the sequence is KREVKSNPEKAKPGKRAQERAAEKAQKAADAAAATAE. Over residues 111-120 the composition is skewed to low complexity; the sequence is AADAAAATAE.

This sequence belongs to the bacterial ribosomal protein bS16 family.

The sequence is that of Small ribosomal subunit protein bS16 from Rhizobium rhizogenes (strain K84 / ATCC BAA-868) (Agrobacterium radiobacter).